The chain runs to 465 residues: Poly(A) polymerase I (465 aa).

Catalysis depends on residues Asp80, Asp82, and Asp162. The disordered stretch occupies residues 430-465 (APPEQKGMLNELDDDPAPRRRRSRPRKRAPRREGTV). The segment covering 448–459 (RRRRSRPRKRAP) has biased composition (basic residues).

This sequence belongs to the tRNA nucleotidyltransferase/poly(A) polymerase family.

It carries out the reaction RNA(n) + ATP = RNA(n)-3'-adenine ribonucleotide + diphosphate. In terms of biological role, adds poly(A) tail to the 3' end of many RNAs, which usually targets these RNAs for decay. Plays a significant role in the global control of gene expression, through influencing the rate of transcript degradation, and in the general RNA quality control. The chain is Poly(A) polymerase I from Salmonella typhi.